The sequence spans 220 residues: Probable GTP-binding protein EngB (220 aa).

One can recognise an EngB-type G domain in the interval 31–205 (AGVEIAFAGR…LGILNEWCHP (175 aa)). Residues 39–46 (GRSNAGKS), 66–70 (GRTQL), 84–87 (DLPG), 151–154 (TKAD), and 184–186 (FSS) each bind GTP. Residues Ser-46 and Thr-68 each contribute to the Mg(2+) site.

The protein belongs to the TRAFAC class TrmE-Era-EngA-EngB-Septin-like GTPase superfamily. EngB GTPase family. Requires Mg(2+) as cofactor.

Its function is as follows. Necessary for normal cell division and for the maintenance of normal septation. This is Probable GTP-binding protein EngB from Shewanella sediminis (strain HAW-EB3).